The primary structure comprises 258 residues: Phycoerythrobilin:ferredoxin oxidoreductase (258 aa).

This sequence belongs to the HY2 family.

The catalysed reaction is (3Z)-phycoerythrobilin + oxidized 2[4Fe-4S]-[ferredoxin] = 15,16-dihydrobiliverdin + reduced 2[4Fe-4S]-[ferredoxin] + 2 H(+). Functionally, catalyzes the two-electron reduction of the C2 and C3(1) diene system of 15,16-dihydrobiliverdin. The chain is Phycoerythrobilin:ferredoxin oxidoreductase from Prochlorococcus marinus (strain NATL2A).